The following is a 585-amino-acid chain: Glycerol-3-phosphate dehydrogenase (585 aa).

37-65 contacts FAD; sequence DVVVIGGGVVGSGCALDAATRGLKVALVE.

Belongs to the FAD-dependent glycerol-3-phosphate dehydrogenase family. The cofactor is FAD.

It is found in the cytoplasm. It carries out the reaction a quinone + sn-glycerol 3-phosphate = dihydroxyacetone phosphate + a quinol. This chain is Glycerol-3-phosphate dehydrogenase (glpD), found in Mycobacterium leprae (strain TN).